The sequence spans 105 residues: MLMPKEDRNKIHQYLFQEGVVVAKKDFNQAKHEEIDTKNLYVIKALQSLTSKGYVKTQFSWQYYYYTLTEEGVEYLREYLNLPEHIVPGTYIQERNPTQRPQRRY.

It belongs to the eukaryotic ribosomal protein eS10 family. As to quaternary structure, component of the small ribosomal subunit (SSU). Mature yeast ribosomes consist of a small (40S) and a large (60S) subunit. The 40S small subunit contains 1 molecule of ribosomal RNA (18S rRNA) and 33 different proteins (encoded by 57 genes). The large 60S subunit contains 3 rRNA molecules (25S, 5.8S and 5S rRNA) and 46 different proteins (encoded by 81 genes). eS10 interacts with GCN1 (via middle region); this interaction is direct and promotes GCN2 kinase activity. In terms of processing, the N-terminus is not modified.

It localises to the cytoplasm. In terms of biological role, component of the ribosome, a large ribonucleoprotein complex responsible for the synthesis of proteins in the cell. The small ribosomal subunit (SSU) binds messenger RNAs (mRNAs) and translates the encoded message by selecting cognate aminoacyl-transfer RNA (tRNA) molecules. The large subunit (LSU) contains the ribosomal catalytic site termed the peptidyl transferase center (PTC), which catalyzes the formation of peptide bonds, thereby polymerizing the amino acids delivered by tRNAs into a polypeptide chain. The nascent polypeptides leave the ribosome through a tunnel in the LSU and interact with protein factors that function in enzymatic processing, targeting, and the membrane insertion of nascent chains at the exit of the ribosomal tunnel. eS10 plays a role as a positive regulator of the GCN2 kinase activity by stimulating GCN1-mediated GCN2 activation. The chain is Small ribosomal subunit protein eS10A from Saccharomyces cerevisiae (strain ATCC 204508 / S288c) (Baker's yeast).